A 101-amino-acid polypeptide reads, in one-letter code: Large ribosomal subunit protein bL28 (101 aa).

Belongs to the bacterial ribosomal protein bL28 family.

This chain is Large ribosomal subunit protein bL28, found in Caulobacter sp. (strain K31).